Reading from the N-terminus, the 204-residue chain is uncharacterized protein (204 aa).

Its function is as follows. Possibly involved in pGI2 replication mechanism. This is an uncharacterized protein from Bacillus thuringiensis.